Here is a 310-residue protein sequence, read N- to C-terminus: Carbamate kinase 1 (310 aa).

As to quaternary structure, homodimer (predominantly) and homotetramer.

The protein resides in the cytoplasm. It carries out the reaction hydrogencarbonate + NH4(+) + ATP = carbamoyl phosphate + ADP + H2O + H(+). The protein operates within metabolic intermediate metabolism; carbamoyl phosphate degradation; CO(2) and NH(3) from carbamoyl phosphate: step 1/1. Inhibited by adenosine(5')pentaphospho(5')adenosine (Ap5A), Ap6A and to a much lower extent by Ap4A. In terms of biological role, catalyzes the reversible synthesis of carbamate and ATP from carbamoyl phosphate and ADP. Can also catalyze, although with low efficiency, the phosphorylation of bicarbonate, leading to the formation of carboxyphosphate, an unstable intermediate found in the reactions catalyzed by carbamoyl-phosphate synthase and biotin carboxylase. Can also use acetate. The sequence is that of Carbamate kinase 1 (arcC1) from Enterococcus faecium (Streptococcus faecium).